We begin with the raw amino-acid sequence, 300 residues long: Probable phytol kinase, chloroplastic (300 aa).

The N-terminal 36 residues, 1–36 (MAAARPALPSSPTSLLLARSTSAPDLAARRPRRWLV), are a transit peptide targeting the chloroplast. 7 helical membrane-spanning segments follow: residues 60-78 (LLRD…YSLV), 98-118 (VVHV…SNST), 122-142 (FFAA…GLGF), 168-188 (YVIV…IGIV), 227-247 (FISG…LGYI), 254-274 (ALGK…IPVT), and 276-296 (VVDD…LLFG).

Belongs to the polyprenol kinase family.

Its subcellular location is the plastid. It is found in the chloroplast membrane. The catalysed reaction is phytol + CTP = phytyl phosphate + CDP + H(+). It participates in cofactor biosynthesis; tocopherol biosynthesis. Functionally, involved in the activation and reutilization of phytol from chlorophyll degradation in plant metabolism, including tocopherol biosynthesis. Catalyzes the conversion of phytol to phytol monophosphate (PMP). This is Probable phytol kinase, chloroplastic from Triticum aestivum (Wheat).